The following is a 194-amino-acid chain: CASP-like protein 2C2 (194 aa).

Residues 1 to 27 (MAAGQPRPPPPPSSVRTERVLRAACAA) lie on the Cytoplasmic side of the membrane. The chain crosses the membrane as a helical span at residues 28-48 (MAAAGALLLGFSAETKTVIFV). Residues 49–58 (QKKAVPKDVQ) are Extracellular-facing. A helical membrane pass occupies residues 59 to 79 (ALWVLIVAAAAAAAYHAAQLA). Residues 80 to 113 (RCLCMDRLAGGGGGCRRLRRAVACATFLLDKGCA) lie on the Cytoplasmic side of the membrane. Residues 114–134 (YMVLATTVAALQACFVGLLGV) form a helical membrane-spanning segment. The Extracellular segment spans residues 135–152 (EALQWSKLCNIYTRFCEQ). Residues 153–173 (AAAGMVCSLVAAAGMAVLSAF) traverse the membrane as a helical segment. Topologically, residues 174–194 (SARDLFRRRRPCSPCVQVQQV) are cytoplasmic.

The protein belongs to the Casparian strip membrane proteins (CASP) family. In terms of assembly, homodimer and heterodimers.

The protein localises to the cell membrane. The chain is CASP-like protein 2C2 from Sorghum bicolor (Sorghum).